The primary structure comprises 571 residues: Potassium-transporting ATPase potassium-binding subunit (571 aa).

12 consecutive transmembrane segments (helical) span residues 5–25 (GWMQIALYGAVVLALVRPLGG), 64–84 (LAYAGAMVLFNVAGFVLLYAL), 136–156 (GLTHQNFVSAASGMAVAVALI), 179–199 (LYVLLPLCTVLALFYVSQGMP), 220–240 (VGPVASQVAIKMLGTNGGGFF), 254–274 (LSNFLQMLSIFVIGAALTNVF), 285–305 (WAILTAMGLLFLAGVTVTYWA), 330–350 (FGIAASALFAVITTAASCGAV), 375–395 (IIGGVGAGLYGMLVFVVVAIF), 421–441 (MLGILCLPLMMLGFTAFATVV), 488–508 (LAIGMLVGRFFVKIPVLAIAG), and 527–547 (GGLFVGLLVGVVLIIGGLTFF).

The protein belongs to the KdpA family. The system is composed of three essential subunits: KdpA, KdpB and KdpC.

It is found in the cell inner membrane. Part of the high-affinity ATP-driven potassium transport (or Kdp) system, which catalyzes the hydrolysis of ATP coupled with the electrogenic transport of potassium into the cytoplasm. This subunit binds the periplasmic potassium ions and delivers the ions to the membrane domain of KdpB through an intramembrane tunnel. This is Potassium-transporting ATPase potassium-binding subunit from Methylorubrum extorquens (strain PA1) (Methylobacterium extorquens).